The primary structure comprises 317 residues: Egg-laying defective protein 26 (317 aa).

The LRAT domain maps to 156–277 (EVNVSGVKFY…CSTGVPFSYD (122 aa)). Active-site residues include His166 and His178. The active-site Acyl-thioester intermediate is Cys261.

As to expression, highly expressed in the cells of the spermatheca, the mouth, and the lining of the pharynx, the rectum, and the excretory canal. Also expressed in the pharyngeal intestinal junction cell.

The protein localises to the apical cell membrane. Putative acyltransferase. Plays a role in the morphogenesis of a vulval toroid cell, vulF, which is located where the vulva and the uterus connect. Not required for specifying vulval cell fate. This chain is Egg-laying defective protein 26, found in Caenorhabditis elegans.